The primary structure comprises 252 residues: NADP-dependent (R)-specific alcohol dehydrogenase (252 aa).

Residues 16 to 19 (TLGI), 39 to 40 (RH), 63 to 64 (DA), Asn-90, Tyr-156, Lys-160, and 191 to 195 (IKTPL) each bind NADP(+). The Proton donor/acceptor role is filled by Tyr-156. Gln-252 contacts Mg(2+).

Belongs to the short-chain dehydrogenases/reductases (SDR) family. In terms of assembly, homotetramer. The cofactor is Mg(2+).

It catalyses the reaction a secondary alcohol + NADP(+) = a ketone + NADPH + H(+). It carries out the reaction acetophenone + NADPH + H(+) = (R)-1-phenylethanol + NADP(+). The catalysed reaction is 2,5-hexanedione + 2 NADPH + 2 H(+) = (2R,5R)-hexanediol + 2 NADP(+). The enzyme catalyses ethyl 3-oxobutanoate + NADPH + H(+) = ethyl (R)-3-hydroxybutanoate + NADP(+). It catalyses the reaction 2-octanone + NADPH + H(+) = (2R)-octan-2-ol + NADP(+). Functionally, NADP-dependent (R)-specific alcohol dehydrogenase (ADH) with a broad substrate specificity, able to catalyze in vitro the stereoselective reduction of several aliphatic and aromatic ketones as well as beta-keto esters to the corresponding enantiomerically pure alcohols. This chain is NADP-dependent (R)-specific alcohol dehydrogenase, found in Lentilactobacillus kefiri (Lactobacillus kefiri).